We begin with the raw amino-acid sequence, 1207 residues long: RNA-binding protein 20 (1207 aa).

Positions 1–58 (MVLAAAMSQDADPSGPEQPDRDACIVPGVQGPPAPQGQQGMQPLPPPLPPPPQPQSSL) are disordered. Positions 43–54 (PLPPPLPPPPQP) are enriched in pro residues. The U1-type zinc finger occupies 412-446 (HLPHICSICDKKVFDLKDWELHVKGKLHAQKCLLF). The 76-residue stretch at 521–596 (RVVHICNLPE…EKLLIRMSTR (76 aa)) folds into the RRM domain. A compositionally biased stretch (basic and acidic residues) spans 625–637 (LREADRYGPERPR). 3 disordered regions span residues 625–686 (LREA…NGED), 722–896 (EKYL…MEEL), and 951–1110 (QGET…AELK). An RS region spans residues 631–650 (YGPERPRSRSPMSRSLSPRS). Residues serine 638, serine 640, serine 643, serine 645, and serine 652 each carry the phosphoserine modification. Positions 639 to 650 (RSPMSRSLSPRS) are enriched in low complexity. Residues 668–686 (YAWRDEDRETVPRRENGED) show a composition bias toward basic and acidic residues. Residue serine 729 is modified to Phosphoserine. Basic and acidic residues-rich tracts occupy residues 740-759 (KGREDGYHRKETKAKLDKHP), 772-789 (RKEEARLREPRHPHPEDS), and 796-836 (EPKV…RGAE). Position 789 is a phosphoserine (serine 789). Residues 839-848 (AGTEEQEGME) show a composition bias toward acidic residues. Phosphoserine occurs at positions 853 and 864. Positions 853–863 (SVGTQQEGTES) are enriched in polar residues. Residues 867-876 (ENTRTKKGQD) are compositionally biased toward basic and acidic residues. A phosphoserine mark is found at serine 879, serine 881, and serine 963. Residues 970–979 (VPSTSTSCPN) show a composition bias toward polar residues. Serine 999 carries the phosphoserine modification. Over residues 1011-1022 (YEKEARGAEGSD) the composition is skewed to basic and acidic residues. Phosphoserine occurs at positions 1034, 1046, 1057, 1066, 1078, 1096, and 1101. A compositionally biased stretch (basic and acidic residues) spans 1050–1072 (DDCKARGSPEDGPHEVSPLEEKA). Residues 1073–1102 (SPTTESDLQSQACQENSRYTETRSLNSRSP) show a composition bias toward polar residues. A Matrin-type zinc finger spans residues 1141–1172 (FYCKLCGLFYTSEEAAKVSHCRSTVHYRNLQK). The tract at residues 1181–1207 (GLKETEGVDSPSPERSGIGPHLERKKL) is disordered. 2 positions are modified to phosphoserine: serine 1190 and serine 1192.

As to quaternary structure, associates with components of the U1 and U2 U1 small nuclear ribonucleoprotein complexes. In terms of processing, phosphorylation regulates the subcellular localization. Phosphorylation of Ser-638 and Ser-640 in the RS (arginine/serine-rich) region promotes nuclear localization of the protein. In contrast, phosphorylation of the C-terminal disordered region promotes localization to cytoplasmic ribonucleoprotein granules.

The protein resides in the nucleus. It localises to the cytoplasm. The protein localises to the cytoplasmic ribonucleoprotein granule. In terms of biological role, RNA-binding protein that acts as a regulator of mRNA splicing of a subset of genes encoding key structural proteins involved in cardiac development, such as TTN (Titin), CACNA1C, CAMK2D or PDLIM5/ENH. Acts as a repressor of mRNA splicing: specifically binds the 5'UCUU-3' motif that is predominantly found within intronic sequences of pre-mRNAs, leading to the exclusion of specific exons in target transcripts. RBM20-mediated exon skipping is hormone-dependent and is essential for TTN isoform transition in both cardiac and skeletal muscles. RBM20-mediated exon skipping of TTN provides substrates for the formation of circular RNA (circRNAs) from the TTN transcripts. Together with RBM24, promotes the expression of short isoforms of PDLIM5/ENH in cardiomyocytes. The chain is RNA-binding protein 20 from Rattus norvegicus (Rat).